A 107-amino-acid polypeptide reads, in one-letter code: MAELAKYERVVIDQDICISCGACVAACPYQALELDENGKSRLIWEKCKDDFSCVAVCPVKAISKASEATPEAKAKKGWYRFGKSLTPEEQKAFEEWKTKYGITAPPV.

4Fe-4S ferredoxin-type domains lie at 8–37 (ERVV…LDEN) and 38–67 (GKSR…KASE). The [4Fe-4S] cluster site is built by Cys-17, Cys-20, and Cys-23. Cys-27, Cys-47, and Cys-53 together coordinate [3Fe-4S] cluster. Residue Cys-57 participates in [4Fe-4S] cluster binding.

As to quaternary structure, monomer. It depends on [4Fe-4S] cluster as a cofactor. [3Fe-4S] cluster is required as a cofactor. The N-terminus is blocked.

Its function is as follows. Ferredoxins are iron-sulfur proteins that transfer electrons in a wide variety of metabolic reactions. This Pyrobaculum islandicum (strain DSM 4184 / JCM 9189 / GEO3) protein is Ferredoxin.